Here is a 567-residue protein sequence, read N- to C-terminus: Methionine--tRNA ligase (567 aa).

Residues 11–21 (PYVQTVPHLGN) carry the 'HIGH' region motif. Zn(2+)-binding residues include C143, C146, C156, and C159. Positions 331–335 (KFSKS) match the 'KMSKS' region motif. Position 334 (K334) interacts with ATP.

It belongs to the class-I aminoacyl-tRNA synthetase family. MetG type 1 subfamily. Zn(2+) is required as a cofactor.

It localises to the cytoplasm. It catalyses the reaction tRNA(Met) + L-methionine + ATP = L-methionyl-tRNA(Met) + AMP + diphosphate. In terms of biological role, is required not only for elongation of protein synthesis but also for the initiation of all mRNA translation through initiator tRNA(fMet) aminoacylation. This is Methionine--tRNA ligase from Pyrobaculum islandicum (strain DSM 4184 / JCM 9189 / GEO3).